Here is a 346-residue protein sequence, read N- to C-terminus: Acrosin (346 aa).

The signal sequence occupies residues 1–19 (MALLLPLAVLLAACRPGHG). Cystine bridges form between Cys-24–Cys-146, Cys-27–Cys-154, Cys-70–Cys-86, Cys-168–Cys-240, Cys-203–Cys-219, and Cys-230–Cys-260. A Peptidase S1 domain is found at 41–284 (VVGGTEALHG…FYNWILLQVR (244 aa)). Catalysis depends on His-85, which acts as the Charge relay system. Asn-128 is a glycosylation site (N-linked (GlcNAc...) asparagine). Catalysis depends on Asp-134, which acts as the Charge relay system. Asn-204 carries N-linked (GlcNAc...) asparagine glycosylation. The active-site Charge relay system is the Ser-234. Residues 266 to 346 (PGIYTSTQHF…LLQSLWGSKA (81 aa)) constitute a propeptide that is removed on maturation.

The protein belongs to the peptidase S1 family. As to quaternary structure, heavy chain (catalytic) and a light chain linked by two disulfide bonds. Glycosylated.

It catalyses the reaction Preferential cleavage: Arg-|-Xaa, Lys-|-Xaa.. With respect to regulation, inhibited by aprotinin, ovomucoid, soybean trypsin inhibitor, benzamidine, p-aminobenzamidine, and zinc ions. Activity also inhibited by a Kazal-type proteinase inhibitor. Serine protease of trypsin-like cleavage specificity. Synthesized in a zymogen form, proacrosin and stored in the acrosome. In Meleagris gallopavo (Wild turkey), this protein is Acrosin.